Here is a 208-residue protein sequence, read N- to C-terminus: ATP phosphoribosyltransferase (208 aa).

The protein belongs to the ATP phosphoribosyltransferase family. Short subfamily. As to quaternary structure, heteromultimer composed of HisG and HisZ subunits.

The protein localises to the cytoplasm. The catalysed reaction is 1-(5-phospho-beta-D-ribosyl)-ATP + diphosphate = 5-phospho-alpha-D-ribose 1-diphosphate + ATP. It functions in the pathway amino-acid biosynthesis; L-histidine biosynthesis; L-histidine from 5-phospho-alpha-D-ribose 1-diphosphate: step 1/9. Its function is as follows. Catalyzes the condensation of ATP and 5-phosphoribose 1-diphosphate to form N'-(5'-phosphoribosyl)-ATP (PR-ATP). Has a crucial role in the pathway because the rate of histidine biosynthesis seems to be controlled primarily by regulation of HisG enzymatic activity. The polypeptide is ATP phosphoribosyltransferase (Lactococcus lactis subsp. cremoris (strain MG1363)).